A 284-amino-acid chain; its full sequence is 2,3,4,5-tetrahydropyridine-2,6-dicarboxylate N-succinyltransferase (284 aa).

2 residues coordinate substrate: arginine 111 and aspartate 148.

The protein belongs to the transferase hexapeptide repeat family. As to quaternary structure, homotrimer.

It localises to the cytoplasm. It catalyses the reaction (S)-2,3,4,5-tetrahydrodipicolinate + succinyl-CoA + H2O = (S)-2-succinylamino-6-oxoheptanedioate + CoA. The protein operates within amino-acid biosynthesis; L-lysine biosynthesis via DAP pathway; LL-2,6-diaminopimelate from (S)-tetrahydrodipicolinate (succinylase route): step 1/3. The protein is 2,3,4,5-tetrahydropyridine-2,6-dicarboxylate N-succinyltransferase of Brucella anthropi (strain ATCC 49188 / DSM 6882 / CCUG 24695 / JCM 21032 / LMG 3331 / NBRC 15819 / NCTC 12168 / Alc 37) (Ochrobactrum anthropi).